The primary structure comprises 243 residues: uncharacterized protein (243 aa).

The protein belongs to the ycf23 family.

The protein localises to the plastid. It localises to the cyanelle. This is an uncharacterized protein from Cyanophora paradoxa.